Consider the following 199-residue polypeptide: V-type proton ATPase subunit E (199 aa).

It belongs to the V-ATPase E subunit family.

Produces ATP from ADP in the presence of a proton gradient across the membrane. This Clostridium botulinum (strain Okra / Type B1) protein is V-type proton ATPase subunit E.